Consider the following 338-residue polypeptide: Terpene synthase 1 (338 aa).

The DDxx(x)D/E motif signature appears at 80 to 85; it reads DDALDS. Positions 220–228 match the NDxxSxxxD/E motif motif; the sequence is NDLVSYEKE.

Belongs to the terpene synthase family.

The enzyme catalyses (2E,6E)-farnesyl diphosphate = (2S,3R,6S,9S)-(-)-protoillud-7-ene + diphosphate. Terpene synthase that converts its substrate farnesyl diphosphate (FPP) into the sesquiterpene protoillud-7-ene. This chain is Terpene synthase 1, found in Cavenderia fasciculata (Slime mold).